Here is a 144-residue protein sequence, read N- to C-terminus: MSYAEFDADVVIDARDCILGRVASQVAERALDGERIAVVNAEQAVITGSEDDIMEVYRKRDEVGSDRGPRYPKRPDRIFKRSVRGMLPYKTTRGREAFENVRIYMGNPYEEAEVLEDTSLDRLSNIKFVSLGEVSENLGANVTW.

The protein belongs to the universal ribosomal protein uL13 family. As to quaternary structure, part of the 50S ribosomal subunit.

Functionally, this protein is one of the early assembly proteins of the 50S ribosomal subunit, although it is not seen to bind rRNA by itself. It is important during the early stages of 50S assembly. The chain is Large ribosomal subunit protein uL13 from Natronomonas pharaonis (strain ATCC 35678 / DSM 2160 / CIP 103997 / JCM 8858 / NBRC 14720 / NCIMB 2260 / Gabara) (Halobacterium pharaonis).